We begin with the raw amino-acid sequence, 141 residues long: Secreted RxLR effector protein 69 (141 aa).

The first 19 residues, 1–19, serve as a signal peptide directing secretion; sequence MHSSTILFVLGAAILAVNG. Positions 38-53 match the RxLR-dEER motif; it reads RLLRSNLMKHETGEER. N120 carries an N-linked (GlcNAc...) asparagine glycan.

The protein belongs to the RxLR effector family.

Its subcellular location is the secreted. The protein resides in the host nucleus. Secreted effector that completely suppresses the host cell death induced by cell death-inducing proteins. The polypeptide is Secreted RxLR effector protein 69 (Plasmopara viticola (Downy mildew of grapevine)).